The chain runs to 392 residues: Solute carrier family 35 member B1 (392 aa).

The disordered stretch occupies residues 1–40; sequence MSLTKKIKNEKSLKQEKQTDQLKSNLRNNNNNINNKSKPK. Over residues 7–20 the composition is skewed to basic and acidic residues; it reads IKNEKSLKQEKQTD. Low complexity predominate over residues 25 to 35; it reads NLRNNNNNINN. A run of 9 helical transmembrane segments spans residues 57–77, 97–117, 124–144, 155–175, 179–199, 215–235, 247–267, 285–305, and 341–361; these read ELFFIFCVGGIYIFYLLYGLV, AFLLALQCFFNMVSAWLVSLV, NTPFMKYGFVSMLLVISTFLS, TQVLAKSCKPIPVIFMGLLLF, YPFLKYIVVIVISLGISLFML, HLFGNFILFVSLMMDGVMGPF, ATSMMLNTNIWNLGLFSIMAF, VIKLILAFCITSAIGQQFIFL, and LQWAAICMVFGGLILDLYISY. The short motif at 389–392 is the Di-lysine motif element; that stretch reads KKSL.

This sequence belongs to the nucleotide-sugar transporter family. SLC35B subfamily.

It localises to the endoplasmic reticulum membrane. Functionally, probable sugar transporter. This is Solute carrier family 35 member B1 (slc35b1) from Dictyostelium discoideum (Social amoeba).